The following is a 141-amino-acid chain: Large ribosomal subunit protein uL11 (141 aa).

The protein belongs to the universal ribosomal protein uL11 family. Part of the ribosomal stalk of the 50S ribosomal subunit. Interacts with L10 and the large rRNA to form the base of the stalk. L10 forms an elongated spine to which L12 dimers bind in a sequential fashion forming a multimeric L10(L12)X complex. In terms of processing, one or more lysine residues are methylated.

Functionally, forms part of the ribosomal stalk which helps the ribosome interact with GTP-bound translation factors. The sequence is that of Large ribosomal subunit protein uL11 from Streptococcus uberis (strain ATCC BAA-854 / 0140J).